Here is a 93-residue protein sequence, read N- to C-terminus: Small ribosomal subunit protein uS19 (93 aa).

This sequence belongs to the universal ribosomal protein uS19 family.

In terms of biological role, protein S19 forms a complex with S13 that binds strongly to the 16S ribosomal RNA. The protein is Small ribosomal subunit protein uS19 of Pseudarthrobacter chlorophenolicus (strain ATCC 700700 / DSM 12829 / CIP 107037 / JCM 12360 / KCTC 9906 / NCIMB 13794 / A6) (Arthrobacter chlorophenolicus).